The chain runs to 355 residues: MTASVANPVYPVVWRGDHVELIDQTRLPQQFSVVEIRRSEDMATAIKTMIVRGAPAIGVAAAYGMYLGSCEVTTDNRDGFLSELAGVGDTLKATRPTAVNLFWAVDRMLKVARQTLGPISQIQDQLLTTAQEIGADDVRTCKAIGDHGLSVLPKDPEKLCLLTHCNAGALATAGYGTALGVVRSAWTAGRLARVYADETRPRLQGAKLTTWECVQEEIPVTLISDGMAAHCMQQNLIDVVVVGADRIAANGDAANKIGTYSVALCAKAHNLPFYVAAPLSTIDFDLADGGGIPIEERHPSEIYQIGTTDICPKGVEFYNPAFDVTPAELITGIITEHGVFAPGDIREKLSHHRSA.

Substrate contacts are provided by residues 52-54, R95, and Q204; that span reads RGA. The active-site Proton donor is the D245. 255-256 lines the substrate pocket; sequence NK.

It belongs to the eIF-2B alpha/beta/delta subunits family. MtnA subfamily.

The catalysed reaction is 5-(methylsulfanyl)-alpha-D-ribose 1-phosphate = 5-(methylsulfanyl)-D-ribulose 1-phosphate. Its pathway is amino-acid biosynthesis; L-methionine biosynthesis via salvage pathway; L-methionine from S-methyl-5-thio-alpha-D-ribose 1-phosphate: step 1/6. Its function is as follows. Catalyzes the interconversion of methylthioribose-1-phosphate (MTR-1-P) into methylthioribulose-1-phosphate (MTRu-1-P). This Acaryochloris marina (strain MBIC 11017) protein is Methylthioribose-1-phosphate isomerase.